Here is a 309-residue protein sequence, read N- to C-terminus: Protein FdhE (309 aa).

Belongs to the FdhE family.

The protein localises to the cytoplasm. Its function is as follows. Necessary for formate dehydrogenase activity. The chain is Protein FdhE from Salmonella dublin (strain CT_02021853).